The chain runs to 108 residues: Tetrahydromethanopterin S-methyltransferase subunit B (108 aa).

A helical transmembrane segment spans residues 79-99 (GMFFGFWVTMAILVLVTILAV).

This sequence belongs to the MtrB family. As to quaternary structure, the complex is composed of 8 subunits; MtrA, MtrB, MtrC, MtrD, MtrE, MtrF, MtrG and MtrH.

The protein resides in the cell membrane. It catalyses the reaction 5-methyl-5,6,7,8-tetrahydromethanopterin + coenzyme M + 2 Na(+)(in) = 5,6,7,8-tetrahydromethanopterin + methyl-coenzyme M + 2 Na(+)(out). The protein operates within one-carbon metabolism; methanogenesis from CO(2); methyl-coenzyme M from 5,10-methylene-5,6,7,8-tetrahydromethanopterin: step 2/2. Its function is as follows. Part of a complex that catalyzes the formation of methyl-coenzyme M and tetrahydromethanopterin from coenzyme M and methyl-tetrahydromethanopterin. This is an energy-conserving, sodium-ion translocating step. In Methanococcus maripaludis (strain C5 / ATCC BAA-1333), this protein is Tetrahydromethanopterin S-methyltransferase subunit B.